We begin with the raw amino-acid sequence, 140 residues long: UPF0102 protein ACIAD1132 (140 aa).

The protein belongs to the UPF0102 family.

This chain is UPF0102 protein ACIAD1132, found in Acinetobacter baylyi (strain ATCC 33305 / BD413 / ADP1).